The primary structure comprises 288 residues: Fibroblast growth factor 2 (288 aa).

The propeptide occupies 1 to 142 (MVGVGGGDVE…TMAAGSITTL (142 aa)). The tract at residues 1-156 (MVGVGGGDVE…EDGGSGAFPP (156 aa)) is disordered. Residues 72-84 (ERPSGSRLGDHGR) show a composition bias toward basic and acidic residues. An omega-N-methylarginine; alternate mark is found at arginine 108, arginine 110, and arginine 112. 3 positions are modified to symmetric dimethylarginine; alternate: arginine 108, arginine 110, and arginine 112. Residues 113-132 (GTAAPRAAPAARGSRPGPAG) are compositionally biased toward low complexity. Asparagine 169 provides a ligand contact to heparin. A Cell attachment site; atypical motif is present at residues 179–181 (DGR). The residue at position 215 (tyrosine 215) is a Phosphotyrosine; by TEC. Positions 221-223 (DGR) match the Cell attachment site; atypical motif. Lysine 228 participates in a covalent cross-link: Glycyl lysine isopeptide (Lys-Gly) (interchain with G-Cter in SUMO1). The interval 261–277 (KRTGQYKLGSKTGPGQK) is heparin-binding.

This sequence belongs to the heparin-binding growth factors family. As to quaternary structure, monomer. Homodimer. Interacts with FGFR1, FGFR2, FGFR3 and FGFR4. Affinity between fibroblast growth factors (FGFs) and their receptors is increased by heparan sulfate glycosaminoglycans that function as coreceptors. Interacts with CSPG4, FGFBP1 and TEC. Found in a complex with FGFBP1, FGF1 and FGF2. Interacts with FGFBP3. Interacts with integrin ITGAV:ITGB3; the interaction is required for FGF2 signaling. Interacts with SNORC (via the extracellular domain). Interacts with glypican GPC3. Phosphorylation at Tyr-215 regulates FGF2 unconventional secretion.

The protein resides in the secreted. It localises to the nucleus. Its function is as follows. Acts as a ligand for FGFR1, FGFR2, FGFR3 and FGFR4. Also acts as an integrin ligand which is required for FGF2 signaling. Binds to integrin ITGAV:ITGB3. Plays an important role in the regulation of cell survival, cell division, cell differentiation and cell migration. Functions as a potent mitogen in vitro. Can induce angiogenesis. Mediates phosphorylation of ERK1/2 and thereby promotes retinal lens fiber differentiation. The sequence is that of Fibroblast growth factor 2 from Pan troglodytes (Chimpanzee).